The primary structure comprises 86 residues: MTFKLFVVVTLVLAIYVATAEEAMKDDSEPAERGCIKYGDRCGSPHGLPSNCCNDWKYKGRCGCTMGVCTCGPNCPSRGCDWSKKG.

The signal sequence occupies residues 1 to 20 (MTFKLFVVVTLVLAIYVATA). Positions 21–33 (EEAMKDDSEPAER) are excised as a propeptide. 4 disulfides stabilise this stretch: C35–C53, C42–C62, C52–C71, and C64–C69.

It belongs to the neurotoxin 39 family. As to expression, expressed by the venom gland.

It is found in the secreted. Functionally, toxin active against S.frugiperda larvae. May act on sodium channels (Nav). The protein is U2-sicaritoxin-Li1a of Loxosceles intermedia (Brown spider).